Here is a 120-residue protein sequence, read N- to C-terminus: Myohemerythrin (120 aa).

Fe cation contacts are provided by H26, H56, E60, H75, H79, H108, and D113.

Belongs to the hemerythrin family.

In terms of biological role, myohemerythrin is an oxygen-binding protein found in the retractor muscles of certain worms. The oxygen-binding site contains two iron atoms. The polypeptide is Myohemerythrin (Sipunculus nudus (Sipunculan worm)).